Consider the following 156-residue polypeptide: Large ribosomal subunit protein uL13 (156 aa).

Belongs to the universal ribosomal protein uL13 family. Part of the 50S ribosomal subunit.

Functionally, this protein is one of the early assembly proteins of the 50S ribosomal subunit, although it is not seen to bind rRNA by itself. It is important during the early stages of 50S assembly. This Archaeoglobus fulgidus (strain ATCC 49558 / DSM 4304 / JCM 9628 / NBRC 100126 / VC-16) protein is Large ribosomal subunit protein uL13.